Reading from the N-terminus, the 266-residue chain is tRNA pseudouridine synthase A (266 aa).

Asp-51 functions as the Nucleophile in the catalytic mechanism. Position 106 (Tyr-106) interacts with substrate.

It belongs to the tRNA pseudouridine synthase TruA family.

The enzyme catalyses uridine(38/39/40) in tRNA = pseudouridine(38/39/40) in tRNA. In terms of biological role, formation of pseudouridine at positions 38, 39 and 40 in the anticodon stem and loop of transfer RNAs. In Pyrococcus furiosus (strain ATCC 43587 / DSM 3638 / JCM 8422 / Vc1), this protein is tRNA pseudouridine synthase A.